Reading from the N-terminus, the 375-residue chain is Coproporphyrin III ferrochelatase (375 aa).

2 residues coordinate Fe-coproporphyrin III: Ser59 and Tyr128. Residues His191 and Glu286 each coordinate Fe(2+).

Belongs to the ferrochelatase family.

Its subcellular location is the cytoplasm. It catalyses the reaction Fe-coproporphyrin III + 2 H(+) = coproporphyrin III + Fe(2+). Its pathway is porphyrin-containing compound metabolism; protoheme biosynthesis. Involved in coproporphyrin-dependent heme b biosynthesis. Catalyzes the insertion of ferrous iron into coproporphyrin III to form Fe-coproporphyrin III. The sequence is that of Coproporphyrin III ferrochelatase from Streptomyces griseus subsp. griseus (strain JCM 4626 / CBS 651.72 / NBRC 13350 / KCC S-0626 / ISP 5235).